Here is a 504-residue protein sequence, read N- to C-terminus: UDP-N-acetylmuramoylalanine--D-glutamate ligase (504 aa).

129–135 contacts ATP; sequence GTNGKTT.

Belongs to the MurCDEF family.

The protein localises to the cytoplasm. The enzyme catalyses UDP-N-acetyl-alpha-D-muramoyl-L-alanine + D-glutamate + ATP = UDP-N-acetyl-alpha-D-muramoyl-L-alanyl-D-glutamate + ADP + phosphate + H(+). Its pathway is cell wall biogenesis; peptidoglycan biosynthesis. Cell wall formation. Catalyzes the addition of glutamate to the nucleotide precursor UDP-N-acetylmuramoyl-L-alanine (UMA). The chain is UDP-N-acetylmuramoylalanine--D-glutamate ligase from Cupriavidus metallidurans (strain ATCC 43123 / DSM 2839 / NBRC 102507 / CH34) (Ralstonia metallidurans).